Here is a 333-residue protein sequence, read N- to C-terminus: Syntaxin-4 (333 aa).

The Cytoplasmic portion of the chain corresponds to 1-312 (MGKDRLPELL…QHQKKARKKK (312 aa)). Residues 50–66 (YSVVSQNSHSCSNNNSS) are compositionally biased toward low complexity. Residues 50–81 (YSVVSQNSHSCSNNNSSTEPKDRSSSKMTQYG) form a disordered region. Positions 91 to 116 (YTEIRQQLAQIAANLETMNRMAQTVN) form a coiled coil. Positions 239 to 301 (LREMMDRFNE…DKGADELDQA (63 aa)) constitute a t-SNARE coiled-coil homology domain. Residues 313–333 (IMLIVILAAVLLVLLLVGIYL) traverse the membrane as a helical; Anchor for type IV membrane protein segment.

This sequence belongs to the syntaxin family.

It localises to the membrane. Its function is as follows. Potentially involved in docking of synaptic vesicles at presynaptic active zones. The chain is Syntaxin-4 from Drosophila melanogaster (Fruit fly).